Consider the following 225-residue polypeptide: LHFPL tetraspan subfamily member 2a protein (225 aa).

The next 4 helical transmembrane spans lie at 11-31 (MLWTLLSIVAAFSELIAFLST), 99-119 (IFLAAGILLLCAVAFISIFTM), 129-149 (IFNVCGLLQAIAGLFLIVGLV), and 178-198 (AGWAFYTALAGTVLCFLCAVF).

It belongs to the LHFP family.

It is found in the membrane. Plays a role in fertility. Involved in distal reproductive tract development. The chain is LHFPL tetraspan subfamily member 2a protein from Danio rerio (Zebrafish).